The chain runs to 414 residues: Phosphoglycerate kinase (414 aa).

Substrate contacts are provided by residues Asp-19–Asn-21, Arg-34, His-57–Lys-60, Arg-114, and Arg-154. ATP contacts are provided by residues Glu-332 and Gly-358–Ser-361.

This sequence belongs to the phosphoglycerate kinase family. In terms of assembly, monomer.

The protein resides in the cytoplasm. The catalysed reaction is (2R)-3-phosphoglycerate + ATP = (2R)-3-phospho-glyceroyl phosphate + ADP. Its pathway is carbohydrate degradation; glycolysis; pyruvate from D-glyceraldehyde 3-phosphate: step 2/5. The polypeptide is Phosphoglycerate kinase (Thermococcus onnurineus (strain NA1)).